A 703-amino-acid chain; its full sequence is Arylphorin subunit beta (703 aa).

An N-terminal signal peptide occupies residues 1–16; that stretch reads MKTVIILAGLVALALG. N-linked (GlcNAc...) asparagine glycosylation is found at Asn72 and Asn211.

Belongs to the hemocyanin family. In terms of assembly, arylphorin is a hexamer of subunits alpha and beta. Fat body.

The protein localises to the secreted. It localises to the extracellular space. Arylphorin is a larval storage protein (LSP) which may serve as a storage protein used primarily as a source of aromatic amino acids for protein synthesis during metamorphosis. It is a constituent of the sclerotizing system of the cuticle, and serves as a carrier for ecdysteroid hormone. The protein is Arylphorin subunit beta of Manduca sexta (Tobacco hawkmoth).